Consider the following 35-residue polypeptide: Riboflavin-binding protein (35 aa).

Residues Cys5 and Cys32 are joined by a disulfide bond.

Belongs to the folate receptor family.

In terms of biological role, required for the transport of riboflavin to the developing oocyte. This Struthio camelus (Common ostrich) protein is Riboflavin-binding protein.